The chain runs to 270 residues: Replication protein A 32 kDa subunit (270 aa).

Residue M1 is modified to N-acetylmethionine. A phosphoserine; by PRKDC mark is found at S4 and S8. T21 bears the Phosphothreonine; by PRKDC mark. Positions 21-41 are disordered; it reads TQSPGGFGSPAPSQAEKKSRA. Residue S23 is modified to Phosphoserine; by CDK2. S29 carries the phosphoserine; by CDK1 modification. The residue at position 33 (S33) is a Phosphoserine; by PRKDC. Residues K37 and K38 each participate in a glycyl lysine isopeptide (Lys-Gly) (interchain with G-Cter in ubiquitin) cross-link. A DNA-binding region (OB) is located at residues 74-148; sequence VTIVGIIRHA…KSLVAFKIMP (75 aa). Residues 187-270 are interaction with RAD52, TIPIN, UNG and XPA; that stretch reads GMSEAGNFGG…DDHFKSTDAE (84 aa).

This sequence belongs to the replication factor A protein 2 family. As to quaternary structure, component of the replication protein A complex (RPA/RP-A), a heterotrimeric complex composed of RPA1, RPA2 and RPA3. Interacts with PRPF19; the PRP19-CDC5L complex is recruited to the sites of DNA repair where it ubiquitinates the replication protein A complex (RPA). Interacts with SERTAD3. Interacts with TIPIN. Interacts with TIMELESS. Interacts with PPP4R2; the interaction is direct, DNA damage-dependent and mediates the recruitment of the PP4 catalytic subunit PPP4C. Interacts (hyperphosphorylated) with RAD51. Interacts with SMARCAL1; the interaction is direct and mediates the recruitment to the RPA complex of SMARCAL1. Interacts with RAD52 and XPA; those interactions are direct and associate RAD52 and XPA to the RPA complex. Interacts with FBH1. Interacts with ETAA1; the interaction is direct and promotes ETAA1 recruitment at stalled replication forks. Interacts with RFWD3. Interacts with DDI2. Interacts (in unphosphorylated form via N-terminus) with EIF4EBP3; the interaction enhances EIF4EBP3-mediated inhibition of EIF4E-mediated mRNA nuclear export. Interacts with BRIP1/FANCJ via the RPA1 subunit; following DNA damage they colocalize in foci in the nucleus. Interacts with nuclear UNG (isoform 2); this interaction mediates UNG recruitment to RPA-coated single-stranded DNA at stalled replication forks. Post-translationally, differentially phosphorylated throughout the cell cycle, becoming phosphorylated at the G1-S transition and dephosphorylated in late mitosis. Mainly phosphorylated at Ser-23 and Ser-29, by cyclin A-CDK2 and cyclin B-CDK1, respectively during DNA replication and mitosis. Dephosphorylation may require the serine/threonine-protein phosphatase 4. Phosphorylation at Ser-23 and Ser-29 is a prerequisite for further phosphorylation. Becomes hyperphosphorylated on additional residues including Ser-4, Ser-8, Thr-21 and Ser-33 in response to DNA damage. Hyperphosphorylation is mediated by ATM, ATR and PRKDC. Primarily recruited to DNA repair nuclear foci as a hypophosphorylated form it undergoes subsequent hyperphosphorylation, catalyzed by ATR. Hyperphosphorylation is required for RAD51 recruitment to chromatin and efficient DNA repair. Phosphorylation at Thr-21 depends upon RFWD3 presence. In terms of processing, DNA damage-induced 'Lys-63'-linked polyubiquitination by PRPF19 mediates ATRIP recruitment to the RPA complex at sites of DNA damage and activation of ATR. Ubiquitinated by RFWD3 at stalled replication forks in response to DNA damage: ubiquitination by RFWD3 does not lead to degradation by the proteasome and promotes removal of the RPA complex from stalled replication forks, promoting homologous recombination.

It is found in the nucleus. Its subcellular location is the PML body. Functionally, as part of the heterotrimeric replication protein A complex (RPA/RP-A), binds and stabilizes single-stranded DNA intermediates that form during DNA replication or upon DNA stress. It prevents their reannealing and in parallel, recruits and activates different proteins and complexes involved in DNA metabolism. Thereby, it plays an essential role both in DNA replication and the cellular response to DNA damage. In the cellular response to DNA damage, the RPA complex controls DNA repair and DNA damage checkpoint activation. Through recruitment of ATRIP activates the ATR kinase a master regulator of the DNA damage response. It is required for the recruitment of the DNA double-strand break repair factors RAD51 and RAD52 to chromatin in response to DNA damage. Also recruits to sites of DNA damage proteins like XPA and XPG that are involved in nucleotide excision repair and is required for this mechanism of DNA repair. Also plays a role in base excision repair (BER) probably through interaction with UNG. Also recruits SMARCAL1/HARP, which is involved in replication fork restart, to sites of DNA damage. May also play a role in telomere maintenance. RPA stimulates 5'-3' helicase activity of BRIP1/FANCJ. The chain is Replication protein A 32 kDa subunit (RPA2) from Homo sapiens (Human).